Here is a 126-residue protein sequence, read N- to C-terminus: Holo-[acyl-carrier-protein] synthase (126 aa).

Mg(2+) contacts are provided by D8 and E57.

The protein belongs to the P-Pant transferase superfamily. AcpS family. The cofactor is Mg(2+).

It localises to the cytoplasm. It carries out the reaction apo-[ACP] + CoA = holo-[ACP] + adenosine 3',5'-bisphosphate + H(+). In terms of biological role, transfers the 4'-phosphopantetheine moiety from coenzyme A to a Ser of acyl-carrier-protein. The polypeptide is Holo-[acyl-carrier-protein] synthase (Halorhodospira halophila (strain DSM 244 / SL1) (Ectothiorhodospira halophila (strain DSM 244 / SL1))).